Consider the following 150-residue polypeptide: Dynein light chain Tctex-type protein 2B (150 aa).

Belongs to the dynein light chain Tctex-type family.

It is found in the dynein axonemal particle. Its function is as follows. Acts as one of several non-catalytic accessory components of the cytoplasmic dynein 2 complex (dynein-2 complex), a motor protein complex that drives the movement of cargos along microtubules within cilia and flagella in concert with the intraflagellar transport (IFT) system. Required for proper retrograde ciliary transport. This is Dynein light chain Tctex-type protein 2B (dynlt2b) from Danio rerio (Zebrafish).